We begin with the raw amino-acid sequence, 1448 residues long: DNA-directed RNA polymerase subunit beta' (1448 aa).

Zn(2+) is bound by residues cysteine 66, cysteine 68, cysteine 81, and cysteine 84. Positions 474, 476, and 478 each coordinate Mg(2+). 4 residues coordinate Zn(2+): cysteine 814, cysteine 888, cysteine 895, and cysteine 898. A disordered region spans residues 1408–1448 (LEELQAAIGGDGESPSGDGAAGDGAPSEEDVEQIEASGSEN).

This sequence belongs to the RNA polymerase beta' chain family. The RNAP catalytic core consists of 2 alpha, 1 beta, 1 beta' and 1 omega subunit. When a sigma factor is associated with the core the holoenzyme is formed, which can initiate transcription. Requires Mg(2+) as cofactor. Zn(2+) serves as cofactor.

The enzyme catalyses RNA(n) + a ribonucleoside 5'-triphosphate = RNA(n+1) + diphosphate. In terms of biological role, DNA-dependent RNA polymerase catalyzes the transcription of DNA into RNA using the four ribonucleoside triphosphates as substrates. This Salinibacter ruber (strain DSM 13855 / M31) protein is DNA-directed RNA polymerase subunit beta'.